Reading from the N-terminus, the 395-residue chain is Chorismate synthase (395 aa).

Residues Arg-40 and Arg-46 each coordinate NADP(+). A disordered region spans residues 98 to 120 (LPREGRNAPLSRPRPGHADLTGM). FMN is bound by residues 134-136 (RSS), 256-257 (QA), Gly-301, 316-320 (KPIPS), and Arg-342.

The protein belongs to the chorismate synthase family. In terms of assembly, homotetramer. The cofactor is FMNH2.

It carries out the reaction 5-O-(1-carboxyvinyl)-3-phosphoshikimate = chorismate + phosphate. It functions in the pathway metabolic intermediate biosynthesis; chorismate biosynthesis; chorismate from D-erythrose 4-phosphate and phosphoenolpyruvate: step 7/7. Catalyzes the anti-1,4-elimination of the C-3 phosphate and the C-6 proR hydrogen from 5-enolpyruvylshikimate-3-phosphate (EPSP) to yield chorismate, which is the branch point compound that serves as the starting substrate for the three terminal pathways of aromatic amino acid biosynthesis. This reaction introduces a second double bond into the aromatic ring system. The protein is Chorismate synthase of Bifidobacterium longum subsp. infantis (strain ATCC 15697 / DSM 20088 / JCM 1222 / NCTC 11817 / S12).